Consider the following 482-residue polypeptide: Magnesium-dependent glutamate N-prenyltransferase (482 aa).

Residues Asn-351, Thr-355, Glu-359, and Phe-366 each coordinate Mg(2+).

The protein belongs to the terpene synthase family. It depends on Mg(2+) as a cofactor.

The enzyme catalyses (2E)-geranyl diphosphate + L-glutamate = N-geranyl-L-glutamate + diphosphate. It participates in secondary metabolite biosynthesis. In terms of biological role, magnesium-dependent glutamate N-prenyltransferase: part of the gene cluster that mediates the biosynthesis of domoic acid (DA) and derivatives, natural products with neurochemical activity acting as ionotropic glutamate receptor (iGluR) agonists, thus being neurotoxins causing amnesic shellfish poisoning (ASP). Catalyzes the conversion of L-glutamic acid (L-Glu) to N-geranyl-L-glutamic acid (NGG) in the presence of geranyl diphosphate (GPP). Also able to catalyze the formation of farnesyl-L-glutamate from farnesyl diphosphate (FPP). Cannot use dimethylallyl diphosphate (DMAPP) as substrate. The chain is Magnesium-dependent glutamate N-prenyltransferase from Pseudo-nitzschia multiseries (Marine planktonic diatom).